Consider the following 257-residue polypeptide: Large ribosomal subunit protein uL2 (257 aa).

Positions 207–226 are disordered; that stretch reads VEHPFGGGNHQHIGKPSTIR.

Belongs to the universal ribosomal protein uL2 family. As to quaternary structure, component of the large ribosomal subunit.

Its subcellular location is the cytoplasm. Component of the large ribosomal subunit. The ribosome is a large ribonucleoprotein complex responsible for the synthesis of proteins in the cell. The polypeptide is Large ribosomal subunit protein uL2 (rpl8) (Ictalurus punctatus (Channel catfish)).